Consider the following 317-residue polypeptide: Glycine--tRNA ligase alpha subunit (317 aa).

Belongs to the class-II aminoacyl-tRNA synthetase family. Tetramer of two alpha and two beta subunits.

Its subcellular location is the cytoplasm. The enzyme catalyses tRNA(Gly) + glycine + ATP = glycyl-tRNA(Gly) + AMP + diphosphate. The protein is Glycine--tRNA ligase alpha subunit of Acidovorax ebreus (strain TPSY) (Diaphorobacter sp. (strain TPSY)).